A 58-amino-acid polypeptide reads, in one-letter code: UPF0391 membrane protein OCAR_5266/OCA5_c27040 (58 aa).

The next 2 membrane-spanning stretches (helical) occupy residues 4-24 (WVVT…GGIA) and 30-50 (IAKI…VVGL).

It belongs to the UPF0391 family.

Its subcellular location is the cell membrane. The sequence is that of UPF0391 membrane protein OCAR_5266/OCA5_c27040 from Afipia carboxidovorans (strain ATCC 49405 / DSM 1227 / KCTC 32145 / OM5) (Oligotropha carboxidovorans).